Here is a 100-residue protein sequence, read N- to C-terminus: NADH-quinone oxidoreductase subunit K (100 aa).

The next 3 helical transmembrane spans lie at 3–23, 29–49, and 60–80; these read PTSY…VGVI, LVLF…LVTF, and IVVF…LALL.

This sequence belongs to the complex I subunit 4L family. NDH-1 is composed of 14 different subunits. Subunits NuoA, H, J, K, L, M, N constitute the membrane sector of the complex.

Its subcellular location is the cell membrane. The catalysed reaction is a quinone + NADH + 5 H(+)(in) = a quinol + NAD(+) + 4 H(+)(out). In terms of biological role, NDH-1 shuttles electrons from NADH, via FMN and iron-sulfur (Fe-S) centers, to quinones in the respiratory chain. The immediate electron acceptor for the enzyme in this species is believed to be ubiquinone. Couples the redox reaction to proton translocation (for every two electrons transferred, four hydrogen ions are translocated across the cytoplasmic membrane), and thus conserves the redox energy in a proton gradient. This Roseiflexus castenholzii (strain DSM 13941 / HLO8) protein is NADH-quinone oxidoreductase subunit K.